The sequence spans 143 residues: uncharacterized protein (143 aa).

The N-terminal stretch at 1–32 (MITNLRRRTAMAAAGLGAALGLGILLVPTVDA) is a signal peptide.

This sequence to M.tuberculosis Rv1269c.

This is an uncharacterized protein from Mycobacterium tuberculosis (strain CDC 1551 / Oshkosh).